The chain runs to 466 residues: Argininosuccinate lyase (466 aa).

This sequence belongs to the lyase 1 family. Argininosuccinate lyase subfamily.

It localises to the cytoplasm. It catalyses the reaction 2-(N(omega)-L-arginino)succinate = fumarate + L-arginine. The protein operates within amino-acid biosynthesis; L-arginine biosynthesis; L-arginine from L-ornithine and carbamoyl phosphate: step 3/3. This chain is Argininosuccinate lyase, found in Syntrophobacter fumaroxidans (strain DSM 10017 / MPOB).